A 128-amino-acid polypeptide reads, in one-letter code: Small ribosomal subunit protein uS9 (128 aa).

The disordered stretch occupies residues 106–128; the sequence is PRVVERKKPGRPKARKRFQFSKR. A compositionally biased stretch (basic residues) spans 113–128; sequence KPGRPKARKRFQFSKR.

Belongs to the universal ribosomal protein uS9 family.

This is Small ribosomal subunit protein uS9 from Porphyromonas gingivalis (strain ATCC 33277 / DSM 20709 / CIP 103683 / JCM 12257 / NCTC 11834 / 2561).